Consider the following 201-residue polypeptide: Dynactin subunit 6 (201 aa).

Belongs to the dynactin subunits 5/6 family. Dynactin subunit 6 subfamily. In terms of assembly, member of the pointed-end complex of the dynactin shoulder complex which contains dctn4, dctn5 and dctn6 subunits and Actr10. Within the complex dctn6 forms a heterodimer with dctn5. Interacts with plk1.

It is found in the cytoplasm. The protein resides in the cytoskeleton. Its subcellular location is the chromosome. The protein localises to the centromere. It localises to the kinetochore. In terms of biological role, part of the dynactin complex that activates the molecular motor dynein for ultra-processive transport along microtubules. In Xenopus tropicalis (Western clawed frog), this protein is Dynactin subunit 6 (dctn6).